Consider the following 439-residue polypeptide: Oocyte zinc finger protein XlCOF28 (439 aa).

9 consecutive C2H2-type zinc fingers follow at residues 6-28 (YECT…QRTH), 34-56 (FKCT…KKCH), 62-84 (YMCT…IRTH), 90-112 (FTCT…LRIH), 118-140 (HKCN…QRTH), 146-168 (FQCT…LRIH), 174-196 (YKCS…QRTH), 202-224 (FQCS…ERTH), and 230-252 (YKCS…QKTH). Disordered regions lie at residues 246–275 (KLHQ…APKT) and 285–304 (AGLE…ESPE). 4 consecutive C2H2-type zinc fingers follow at residues 333 to 355 (HKCT…QRTH), 361 to 383 (FKCS…RKIH), 389 to 411 (YTCA…RRTH), and 417 to 439 (YICA…QRIH).

Belongs to the krueppel C2H2-type zinc-finger protein family.

It is found in the nucleus. Its function is as follows. May be involved in transcriptional regulation. The chain is Oocyte zinc finger protein XlCOF28 from Xenopus laevis (African clawed frog).